Reading from the N-terminus, the 669-residue chain is DNA mismatch repair protein MutL (669 aa).

The interval 357 to 379 is disordered; the sequence is EQRQNTENNQEKTFSSEESNSKS. The segment covering 361-379 has biased composition (polar residues); it reads NTENNQEKTFSSEESNSKS.

It belongs to the DNA mismatch repair MutL/HexB family.

Functionally, this protein is involved in the repair of mismatches in DNA. It is required for dam-dependent methyl-directed DNA mismatch repair. May act as a 'molecular matchmaker', a protein that promotes the formation of a stable complex between two or more DNA-binding proteins in an ATP-dependent manner without itself being part of a final effector complex. This chain is DNA mismatch repair protein MutL, found in Staphylococcus aureus (strain Mu3 / ATCC 700698).